The following is a 362-amino-acid chain: Probable dual-specificity RNA methyltransferase RlmN (362 aa).

Glu91 functions as the Proton acceptor in the catalytic mechanism. A Radical SAM core domain is found at Gln97 to Arg329. An intrachain disulfide couples Cys104 to Cys340. [4Fe-4S] cluster contacts are provided by Cys111, Cys115, and Cys118. Residues Gly163–Glu164, Ser195, Ser218–His220, and Asn296 contribute to the S-adenosyl-L-methionine site. The S-methylcysteine intermediate role is filled by Cys340.

It belongs to the radical SAM superfamily. RlmN family. It depends on [4Fe-4S] cluster as a cofactor.

Its subcellular location is the cytoplasm. The catalysed reaction is adenosine(2503) in 23S rRNA + 2 reduced [2Fe-2S]-[ferredoxin] + 2 S-adenosyl-L-methionine = 2-methyladenosine(2503) in 23S rRNA + 5'-deoxyadenosine + L-methionine + 2 oxidized [2Fe-2S]-[ferredoxin] + S-adenosyl-L-homocysteine. It catalyses the reaction adenosine(37) in tRNA + 2 reduced [2Fe-2S]-[ferredoxin] + 2 S-adenosyl-L-methionine = 2-methyladenosine(37) in tRNA + 5'-deoxyadenosine + L-methionine + 2 oxidized [2Fe-2S]-[ferredoxin] + S-adenosyl-L-homocysteine. Functionally, specifically methylates position 2 of adenine 2503 in 23S rRNA and position 2 of adenine 37 in tRNAs. The sequence is that of Probable dual-specificity RNA methyltransferase RlmN from Streptococcus gordonii (strain Challis / ATCC 35105 / BCRC 15272 / CH1 / DL1 / V288).